The chain runs to 195 residues: Probable nicotinate-nucleotide adenylyltransferase (195 aa).

Belongs to the NadD family.

The enzyme catalyses nicotinate beta-D-ribonucleotide + ATP + H(+) = deamido-NAD(+) + diphosphate. It functions in the pathway cofactor biosynthesis; NAD(+) biosynthesis; deamido-NAD(+) from nicotinate D-ribonucleotide: step 1/1. Functionally, catalyzes the reversible adenylation of nicotinate mononucleotide (NaMN) to nicotinic acid adenine dinucleotide (NaAD). The chain is Probable nicotinate-nucleotide adenylyltransferase from Mesorhizobium japonicum (strain LMG 29417 / CECT 9101 / MAFF 303099) (Mesorhizobium loti (strain MAFF 303099)).